The following is a 216-amino-acid chain: Adenylate kinase (216 aa).

10–15 (GAGKGT) is a binding site for ATP. The NMP stretch occupies residues 30-59 (STGDIFRAHMSQGTPLGKLAKEYVDAGKYV). Residues Thr31, Arg36, 57–59 (KYV), 85–88 (GYPR), and Gln92 each bind AMP. Residues 126-163 (GRRVCRSCGATYHVRFNPPREAGRCDRCGGELYQRSDD) are LID. ATP is bound at residue Arg127. Zn(2+)-binding residues include Cys130 and Cys133. 136–137 (TY) provides a ligand contact to ATP. Zn(2+) contacts are provided by Cys150 and Cys153. The AMP site is built by Arg160 and Arg171. An ATP-binding site is contributed by Gln199.

The protein belongs to the adenylate kinase family. As to quaternary structure, monomer.

It localises to the cytoplasm. The catalysed reaction is AMP + ATP = 2 ADP. The protein operates within purine metabolism; AMP biosynthesis via salvage pathway; AMP from ADP: step 1/1. Functionally, catalyzes the reversible transfer of the terminal phosphate group between ATP and AMP. Plays an important role in cellular energy homeostasis and in adenine nucleotide metabolism. The protein is Adenylate kinase of Symbiobacterium thermophilum (strain DSM 24528 / JCM 14929 / IAM 14863 / T).